The sequence spans 160 residues: Nascent polypeptide-associated complex subunit beta (160 aa).

Disordered stretches follow at residues 16-36 and 118-160; these read GGKG…GTDD and ESYQ…TEVE. The segment covering 20–30 has biased composition (basic residues); it reads TPRRKVKKVHK. In terms of domain architecture, NAC-A/B spans 33–98; that stretch reads GTDDKKLQTA…GEDKELTELV (66 aa). A compositionally biased stretch (basic and acidic residues) spans 124–134; the sequence is QKEKGEDGDKK. Acidic residues predominate over residues 135–145; that stretch reads DDDDEDDDDIP.

Belongs to the NAC-beta family. As to quaternary structure, part of the nascent polypeptide-associated complex (NAC), consisting of EGD2 and EGD1. NAC associates with ribosomes via EGD1.

The protein resides in the cytoplasm. The protein localises to the nucleus. Functionally, component of the nascent polypeptide-associated complex (NAC), a dynamic component of the ribosomal exit tunnel, protecting the emerging polypeptides from interaction with other cytoplasmic proteins to ensure appropriate nascent protein targeting. The NAC complex also promotes mitochondrial protein import by enhancing productive ribosome interactions with the outer mitochondrial membrane and blocks the inappropriate interaction of ribosomes translating non-secretory nascent polypeptides with translocation sites in the membrane of the endoplasmic reticulum. EGD1 may act as a transcription factor that exert a negative effect on the expression of several genes that are transcribed by RNA polymerase II. The chain is Nascent polypeptide-associated complex subunit beta (EGD1) from Phaeosphaeria nodorum (strain SN15 / ATCC MYA-4574 / FGSC 10173) (Glume blotch fungus).